Here is a 279-residue protein sequence, read N- to C-terminus: Methyltransferase ausD (279 aa).

S-adenosyl-L-methionine is bound by residues 124–125 (DL), 152–153 (DI), and Arg244.

This sequence belongs to the class I-like SAM-binding methyltransferase superfamily. Homodimer.

It participates in secondary metabolite biosynthesis; terpenoid biosynthesis. Methyltransferase; part of the gene cluster that mediates the biosynthesis of calidodehydroaustin, a fungal meroterpenoid. The first step of the pathway is the synthesis of 3,5-dimethylorsellinic acid by the polyketide synthase ausA. 3,5-dimethylorsellinic acid is then prenylated by the polyprenyl transferase ausN. Further epoxidation by the FAD-dependent monooxygenase ausM and cyclization by the probable terpene cyclase ausL lead to the formation of protoaustinoid A. Protoaustinoid A is then oxidized to spiro-lactone preaustinoid A3 by the combined action of the FAD-binding monooxygenases ausB and ausC, and the dioxygenase ausE. Acid-catalyzed keto-rearrangement and ring contraction of the tetraketide portion of preaustinoid A3 by ausJ lead to the formation of preaustinoid A4. The aldo-keto reductase ausK, with the help of ausH, is involved in the next step by transforming preaustinoid A4 into isoaustinone which is in turn hydroxylated by the P450 monooxygenase ausI to form austinolide. The cytochrome P450 monooxygenase ausG modifies austinolide to austinol. Austinol is further acetylated to austin by the O-acetyltransferase ausP, which spontaneously changes to dehydroaustin. The cytochrome P450 monooxygenase ausR then converts dehydroaustin is into 7-dehydrodehydroaustin. The hydroxylation catalyzed by ausR permits the O-acetyltransferase ausQ to add an additional acetyl group to the molecule, leading to the formation of acetoxydehydroaustin. The short chain dehydrogenase ausT catalyzes the reduction of the double bond present between carbon atoms 1 and 2 to convert 7-dehydrodehydroaustin into 1,2-dihydro-7-hydroxydehydroaustin. AusQ catalyzes not only an acetylation reaction but also the addition of the PKS ausV diketide product to 1,2-dihydro-7-hydroxydehydroaustin, forming precalidodehydroaustin. Finally, the iron/alpha-ketoglutarate-dependent dioxygenase converts precalidodehydroaustin into calidodehydroaustin. This is Methyltransferase ausD from Aspergillus calidoustus.